The primary structure comprises 324 residues: Antihemorrhagic factor cHLP-A (324 aa).

Residues 1-19 (MNSLVALVLLGQIIGSTLS) form the signal peptide. 2 consecutive Cystatin fetuin-A-type domains span residues 21 to 130 (QLGP…VKCK) and 141 to 254 (RNCP…SDCV). Cystine bridges form between Cys-28/Cys-315, Cys-85/Cys-96, Cys-110/Cys-129, Cys-143/Cys-146, Cys-205/Cys-217, and Cys-230/Cys-253. N-linked (GlcNAc...) asparagine glycosylation occurs at Asn-204. N-linked (GlcNAc...) asparagine glycosylation is present at Asn-282.

This sequence belongs to the fetuin family. Homodimer. As to expression, expressed by the liver.

It localises to the secreted. Functionally, potent inhibitor of hemorrhagic activity but also proteolytic activities. Inhibition occurs by formation of a non-covalent complex between this protein and the proteinases at their metalloproteinase domains. This chain is Antihemorrhagic factor cHLP-A, found in Gloydius brevicauda (Korean slamosa snake).